Here is a 320-residue protein sequence, read N- to C-terminus: MCGQHYTSIISSITTEASFERVRTHEFIKFSKHKRFDQRHRSMMGQYHSGGEIVSPGTSPFDVLPEDCISNIISFTSPRDACVAASVSKTFESAVSSDCVWDKFLPPEYESLVSRSRVFASKKELYFALCHNPVLIEDGKKSFWLEKASGKRCIMLSSKELWITWGSSPEYWQWISIPESRFNKIAELLDVCWFEIRGKTSARVLSPGTRYSAYIVFKTKDRCPGLGHLPVEVGLGLVGQESSKRFIYFIGPRDRRGRRETRDVTKPDQREDGWMEAELGEFFNEERCDEIEFSVIEIKSPSWKSGLIIQGIEFRPTKSQ.

The region spanning 58–104 (TSPFDVLPEDCISNIISFTSPRDACVAASVSKTFESAVSSDCVWDKF) is the F-box domain.

The sequence is that of F-box protein At2g02240 from Arabidopsis thaliana (Mouse-ear cress).